We begin with the raw amino-acid sequence, 394 residues long: Phosphoglycerate kinase (394 aa).

Substrate is bound by residues 21–23 (DLN), arginine 36, 59–62 (HLGR), arginine 113, and arginine 146. ATP contacts are provided by residues lysine 197, glutamate 319, and 345 to 348 (GGDT).

The protein belongs to the phosphoglycerate kinase family. As to quaternary structure, monomer.

It localises to the cytoplasm. It catalyses the reaction (2R)-3-phosphoglycerate + ATP = (2R)-3-phospho-glyceroyl phosphate + ADP. Its pathway is carbohydrate degradation; glycolysis; pyruvate from D-glyceraldehyde 3-phosphate: step 2/5. The sequence is that of Phosphoglycerate kinase from Halorhodospira halophila (strain DSM 244 / SL1) (Ectothiorhodospira halophila (strain DSM 244 / SL1)).